The primary structure comprises 941 residues: RNA-directed RNA polymerase (941 aa).

Positions 875–918 (SARQGGMGLPPPPPPPLGGGGMAGPPPPPFMGLRPESSVPTSVP) are disordered. Residues 905 to 918 (MGLRPESSVPTSVP) show a composition bias toward low complexity.

Forms a ribonucleoprotein complex with the 23S RNA, where a single polymerase molecule binds to a single viral RNA genome. Since the viral RNA is not encapsidated, ribonucleoprotein complex formation appears to be the strategy to survive in the host as persistent virus.

It localises to the host cytoplasm. It carries out the reaction RNA(n) + a ribonucleoside 5'-triphosphate = RNA(n+1) + diphosphate. Functionally, RNA-directed RNA polymerase that replicates the viral (+) and (-) genome. The protein is RNA-directed RNA polymerase of Saccharomyces 23S RNA narnavirus (ScNV-23S).